A 418-amino-acid chain; its full sequence is Gamma-glutamyl phosphate reductase (418 aa).

It belongs to the gamma-glutamyl phosphate reductase family.

It is found in the cytoplasm. It carries out the reaction L-glutamate 5-semialdehyde + phosphate + NADP(+) = L-glutamyl 5-phosphate + NADPH + H(+). It functions in the pathway amino-acid biosynthesis; L-proline biosynthesis; L-glutamate 5-semialdehyde from L-glutamate: step 2/2. In terms of biological role, catalyzes the NADPH-dependent reduction of L-glutamate 5-phosphate into L-glutamate 5-semialdehyde and phosphate. The product spontaneously undergoes cyclization to form 1-pyrroline-5-carboxylate. The sequence is that of Gamma-glutamyl phosphate reductase from Colwellia psychrerythraea (strain 34H / ATCC BAA-681) (Vibrio psychroerythus).